The sequence spans 87 residues: Kappa-5-bungarotoxin (87 aa).

An N-terminal signal peptide occupies residues 1-21; the sequence is MKTLLLTLVVVTIVCLDLGYT. Disulfide bonds link Cys-24–Cys-42, Cys-35–Cys-63, Cys-48–Cys-52, Cys-67–Cys-79, and Cys-80–Cys-85.

This sequence belongs to the three-finger toxin family. Long-chain subfamily. Kappa-neurotoxin sub-subfamily. Homo- and heterodimer; non-covalently linked. As to expression, expressed by the venom gland.

The protein resides in the secreted. Its function is as follows. Postsynaptic neurotoxin that binds and inhibits neuronal nicotinic acetylcholine receptors (nAChR) with high affinity (IC(50)&lt;100 nM). Is a selective, and slowly reversible antagonist of alpha-3/CHRNA3-containing and some alpha-4/CHRNA4-containing AChRs. This is Kappa-5-bungarotoxin from Bungarus multicinctus (Many-banded krait).